Reading from the N-terminus, the 237-residue chain is Fluoroquinolones export permease protein MT2761 (237 aa).

The next 6 helical transmembrane spans lie at 20 to 40, 49 to 69, 96 to 116, 119 to 139, 147 to 167, and 199 to 219; these read FLHA…PMPV, YVLV…TVFF, VLLA…HGLG, LLPL…VGFS, VTDW…PPVV, and LAPW…AGLC.

As to quaternary structure, the complex is composed of 2 ATP-binding proteins and 2 transmembrane proteins.

It is found in the cell membrane. In terms of biological role, part of the ABC transporter complex involved in fluoroquinolones export. Probably responsible for the translocation of the substrate across the membrane. The polypeptide is Fluoroquinolones export permease protein MT2761 (Mycobacterium tuberculosis (strain CDC 1551 / Oshkosh)).